The following is a 382-amino-acid chain: Neuropeptide Y receptor type 1 (382 aa).

Residues 1–33 lie on the Extracellular side of the membrane; it reads MNSTSFSQVENHSIFCNFSENSQFLAFESDDCH. N-linked (GlcNAc...) asparagine glycosylation is found at N2, N11, and N17. The chain crosses the membrane as a helical span at residues 34-54; the sequence is LPLAMIFTLALAYGAVIILGV. Residues 55–75 are Cytoplasmic-facing; the sequence is TGNLALIMIILKQKEMRNVTN. Residues 76-96 form a helical membrane-spanning segment; it reads ILIVNLSFSDLLVAIMCLPFT. The Extracellular segment spans residues 97–115; the sequence is FVYTLMDHWVFGEAMCKLN. Residues C112 and C197 are joined by a disulfide bond. Residues 116–136 form a helical membrane-spanning segment; the sequence is PFVQCVSITVSIFSLVLIAVE. The Cytoplasmic segment spans residues 137–153; it reads RHQLIINPRGWRPNNRH. The helical transmembrane segment at 154-174 threads the bilayer; it reads AYVGIAVIWVLAVVSSLPFLI. The Extracellular segment spans residues 175–210; the sequence is YQVLTDEPFQNVTLDAFKDKYVCFDKFPSDSHRLSY. N-linked (GlcNAc...) asparagine glycosylation occurs at N185. The chain crosses the membrane as a helical span at residues 211–231; that stretch reads TTLLLMLQYFGPLCFIFICYF. Residues 232-259 lie on the Cytoplasmic side of the membrane; it reads KIYIRLKRRNNMMDKMRDNKYRSSETKR. A helical transmembrane segment spans residues 260–280; the sequence is INIMLLSIVVAFAVCWLPLTI. At 281-298 the chain is on the extracellular side; that stretch reads FNTVFDWNHQIIATCNHN. The helical transmembrane segment at 299-319 threads the bilayer; that stretch reads LLFLLCHLTAMISTCVNPIFY. Residues 320-382 are Cytoplasmic-facing; the sequence is GFLNKNFQRD…KINNDDNEKI (63 aa). C337 carries the S-palmitoyl cysteine lipid modification. Position 367 is a phosphoserine (S367).

Belongs to the G-protein coupled receptor 1 family.

It is found in the cell membrane. In terms of biological role, receptor for neuropeptide Y and peptide YY. The sequence is that of Neuropeptide Y receptor type 1 (NPY1R) from Canis lupus familiaris (Dog).